The primary structure comprises 225 residues: Histone H1 (225 aa).

The disordered stretch occupies residues 1 to 20 (MGPKATSGTRGRGKKVGTKT). The 72-residue stretch at 23–94 (PLPKYKDLIV…GPAGSIKLLK (72 aa)) folds into the H15 domain. The disordered stretch occupies residues 95–147 (KAAQPKPEEAKRAAKPAKRVVKAAKPAKAKPAKAAKAAKPAKPVKAAKAASAV). Positions 107-127 (AAKPAKRVVKAAKPAKAKPAK) are enriched in basic residues. Positions 128–147 (AAKAAKPAKPVKAAKAASAV) are enriched in low complexity.

This sequence belongs to the histone H1/H5 family.

It is found in the nucleus. The protein localises to the chromosome. In terms of biological role, could act as an H1-type linker histone. The chain is Histone H1 (HHOA) from Eremothecium gossypii (strain ATCC 10895 / CBS 109.51 / FGSC 9923 / NRRL Y-1056) (Yeast).